Reading from the N-terminus, the 443-residue chain is Ribosomal protein uS12 methylthiotransferase RimO (443 aa).

Positions 1–114 constitute an MTTase N-terminal domain; it reads MGFVSLGCPK…VMQAVHTHLP (114 aa). [4Fe-4S] cluster is bound by residues cysteine 8, cysteine 44, cysteine 73, cysteine 145, cysteine 149, and cysteine 152. Positions 131 to 372 constitute a Radical SAM core domain; that stretch reads LTPKHYAYLK…MEVAEEVSAR (242 aa). A TRAM domain is found at 375–443; that stretch reads QRKVGQTLRV…ADGHDLWGAV (69 aa).

It belongs to the methylthiotransferase family. RimO subfamily. The cofactor is [4Fe-4S] cluster.

It localises to the cytoplasm. The catalysed reaction is L-aspartate(89)-[ribosomal protein uS12]-hydrogen + (sulfur carrier)-SH + AH2 + 2 S-adenosyl-L-methionine = 3-methylsulfanyl-L-aspartate(89)-[ribosomal protein uS12]-hydrogen + (sulfur carrier)-H + 5'-deoxyadenosine + L-methionine + A + S-adenosyl-L-homocysteine + 2 H(+). Catalyzes the methylthiolation of an aspartic acid residue of ribosomal protein uS12. This Cupriavidus necator (strain ATCC 17699 / DSM 428 / KCTC 22496 / NCIMB 10442 / H16 / Stanier 337) (Ralstonia eutropha) protein is Ribosomal protein uS12 methylthiotransferase RimO.